A 329-amino-acid chain; its full sequence is MSVLEESRPFAQQLSNVYFTILSLFCFKLFVKISLAILSHFYIVKGNRKEAARIAAEFYGVSQGQGSWADRSPLHEAASQGRLLALRTLLSQGYNVNAVTIDHVTPLHEACLGDHVACARTLLEAGANANAITIDGVTPLFNACSQGSASCAELLLEYGAKAQLESCFPSPTHEAASKGHHECLDILIAWGIDVDQDIPHLGTPLYVACMSQQFHCIWKLLYAGADVHKGKYWDTPLHAAAQQPSTEIVNLLLEFGADINAKNTDLLRPVDLATSNSAVERILLQHEATPSSLCQLCRLCIRNYIGRQRFHLIPQLQLPTLLQNFLQYR.

ANK repeat units follow at residues 69–98 (ADRS…NVNA), 102–131 (DHVT…NANA), 135–164 (DGVT…KAQL), 167–196 (CFPS…DVDQ), 200–229 (HLGT…DVHK), and 232–261 (YWDT…DINA). Residues 278 to 329 (AVERILLQHEATPSSLCQLCRLCIRNYIGRQRFHLIPQLQLPTLLQNFLQYR) enclose the SOCS box domain.

It belongs to the ankyrin SOCS box (ASB) family.

It functions in the pathway protein modification; protein ubiquitination. Its function is as follows. May be a substrate-recognition component of a SCF-like ECS (Elongin-Cullin-SOCS-box protein) E3 ubiquitin-protein ligase complex which mediates the ubiquitination and subsequent proteasomal degradation of target proteins. May play a role in the initiation of arteriogenesis. This Mus musculus (Mouse) protein is Ankyrin repeat and SOCS box protein 5 (Asb5).